The sequence spans 919 residues: Transcriptional regulatory protein EDS1 (919 aa).

The segment at 1–54 (MSHHVPNLYGTPIRDPHERKRNSASMGEVNQSVSSRNCERGSEKGTKQRKKASH) is disordered. Over residues 23–36 (SASMGEVNQSVSSR) the composition is skewed to polar residues. Over residues 37 to 46 (NCERGSEKGT) the composition is skewed to basic and acidic residues. Residues 56–85 (CDQCRRKRIKCRFDKHTGVCQGCLEVGEKC) constitute a DNA-binding region (zn(2)-C6 fungal-type). A disordered region spans residues 297–338 (AGFPNKKLGTDGRSDKWDKNSTWKPVYRSSNPSHPSTEKNVS). Basic and acidic residues predominate over residues 304–317 (LGTDGRSDKWDKNS). The segment covering 318–338 (TWKPVYRSSNPSHPSTEKNVS) has biased composition (polar residues).

This sequence belongs to the EDS1/RGT1 family. As to quaternary structure, binds DNA in a sequence-specific manner.

Its subcellular location is the nucleus. This is Transcriptional regulatory protein EDS1 (EDS1) from Saccharomyces cerevisiae (strain ATCC 204508 / S288c) (Baker's yeast).